The chain runs to 205 residues: tRNA (pseudouridine(54)-N(1))-methyltransferase (205 aa).

Residues Leu136, Gly156, 179–184, and Cys189 each bind S-adenosyl-L-methionine; that span reads LSPLEL.

This sequence belongs to the methyltransferase superfamily. TrmY family. Homodimer.

The protein resides in the cytoplasm. It carries out the reaction pseudouridine(54) in tRNA + S-adenosyl-L-methionine = N(1)-methylpseudouridine(54) in tRNA + S-adenosyl-L-homocysteine + H(+). In terms of biological role, specifically catalyzes the N1-methylation of pseudouridine at position 54 (Psi54) in tRNAs. The chain is tRNA (pseudouridine(54)-N(1))-methyltransferase from Methanocaldococcus jannaschii (strain ATCC 43067 / DSM 2661 / JAL-1 / JCM 10045 / NBRC 100440) (Methanococcus jannaschii).